The chain runs to 214 residues: Imidazole glycerol phosphate synthase subunit HisH (214 aa).

The region spanning 3 to 211 is the Glutamine amidotransferase type-1 domain; that stretch reads TIAVIDYDMG…VSKVIPKNLA (209 aa). Cys81 serves as the catalytic Nucleophile. Catalysis depends on residues His186 and Glu188.

As to quaternary structure, heterodimer of HisH and HisF.

It localises to the cytoplasm. The catalysed reaction is 5-[(5-phospho-1-deoxy-D-ribulos-1-ylimino)methylamino]-1-(5-phospho-beta-D-ribosyl)imidazole-4-carboxamide + L-glutamine = D-erythro-1-(imidazol-4-yl)glycerol 3-phosphate + 5-amino-1-(5-phospho-beta-D-ribosyl)imidazole-4-carboxamide + L-glutamate + H(+). The enzyme catalyses L-glutamine + H2O = L-glutamate + NH4(+). Its pathway is amino-acid biosynthesis; L-histidine biosynthesis; L-histidine from 5-phospho-alpha-D-ribose 1-diphosphate: step 5/9. Its function is as follows. IGPS catalyzes the conversion of PRFAR and glutamine to IGP, AICAR and glutamate. The HisH subunit catalyzes the hydrolysis of glutamine to glutamate and ammonia as part of the synthesis of IGP and AICAR. The resulting ammonia molecule is channeled to the active site of HisF. The protein is Imidazole glycerol phosphate synthase subunit HisH of Trichodesmium erythraeum (strain IMS101).